Here is a 528-residue protein sequence, read N- to C-terminus: Phosphoenolpyruvate carboxykinase (ATP) (528 aa).

Arginine 56, tyrosine 192, and lysine 198 together coordinate substrate. ATP-binding positions include lysine 198, histidine 217, and 233–241 (GLSGTGKTT). The Mn(2+) site is built by lysine 198 and histidine 217. Aspartate 254 is a Mn(2+) binding site. Residues glutamate 282, arginine 319, and threonine 444 each contribute to the ATP site. Arginine 319 is a substrate binding site.

This sequence belongs to the phosphoenolpyruvate carboxykinase (ATP) family. Mn(2+) is required as a cofactor.

Its subcellular location is the cytoplasm. It carries out the reaction oxaloacetate + ATP = phosphoenolpyruvate + ADP + CO2. It participates in carbohydrate biosynthesis; gluconeogenesis. Functionally, involved in the gluconeogenesis. Catalyzes the conversion of oxaloacetate (OAA) to phosphoenolpyruvate (PEP) through direct phosphoryl transfer between the nucleoside triphosphate and OAA. The sequence is that of Phosphoenolpyruvate carboxykinase (ATP) from Bacillus anthracis (strain A0248).